A 204-amino-acid chain; its full sequence is Large ribosomal subunit protein eL15 (204 aa).

It belongs to the eukaryotic ribosomal protein eL15 family. Component of the large ribosomal subunit.

Its subcellular location is the cytoplasm. Component of the large ribosomal subunit. The ribosome is a large ribonucleoprotein complex responsible for the synthesis of proteins in the cell. This Hypophthalmichthys molitrix (Silver carp) protein is Large ribosomal subunit protein eL15 (rpl15).